The sequence spans 153 residues: Coiled-coil-helix-coiled-coil-helix domain-containing protein 2 (153 aa).

Disordered regions lie at residues 1-51 (MPRG…AAPR) and 78-106 (HAIT…QGAQ). Residues 14-51 (PPASRAPQMRAAPRRAPAAQPPAAAAPSAVGSPAAAPR) show a composition bias toward low complexity. The 41-residue stretch at 113 to 153 (FGPCSLEIKQFLECAQNQSDVKLCEGFNEVLRQCRIANGLM) folds into the CHCH domain. Short sequence motifs (cx9C motif) lie at residues 116-126 (CSLEIKQFLEC) and 136-146 (CEGFNEVLRQC). Disulfide bonds link C116–C146 and C126–C136.

In terms of assembly, interacts with RBPJ.

It is found in the nucleus. It localises to the mitochondrion. The protein resides in the mitochondrion intermembrane space. Functionally, transcription factor. Binds to the oxygen responsive element of COX4I2 and activates its transcription under hypoxia conditions (4% oxygen), as well as normoxia conditions (20% oxygen). This is Coiled-coil-helix-coiled-coil-helix domain-containing protein 2 (Chchd2) from Mus musculus (Mouse).